The chain runs to 200 residues: Small ribosomal subunit protein uS2 (200 aa).

This sequence belongs to the universal ribosomal protein uS2 family.

The protein is Small ribosomal subunit protein uS2 of Picrophilus torridus (strain ATCC 700027 / DSM 9790 / JCM 10055 / NBRC 100828 / KAW 2/3).